Consider the following 179-residue polypeptide: Coatomer subunit zeta-2 (179 aa).

The protein belongs to the adaptor complexes small subunit family. Oligomeric complex that consists of at least the alpha, beta, beta', gamma, delta, epsilon and zeta subunits.

Its subcellular location is the cytoplasm. The protein resides in the golgi apparatus membrane. The protein localises to the cytoplasmic vesicle. It is found in the COPI-coated vesicle membrane. Its function is as follows. The coatomer is a cytosolic protein complex that binds to dilysine motifs and reversibly associates with Golgi non-clathrin-coated vesicles, which further mediate biosynthetic protein transport from the ER, via the Golgi up to the trans Golgi network. Coatomer complex is required for budding from Golgi membranes, and is essential for the retrograde Golgi-to-ER transport of dilysine-tagged proteins. The zeta subunit may be involved in regulating the coat assembly and, hence, the rate of biosynthetic protein transport due to its association-dissociation properties with the coatomer complex. The sequence is that of Coatomer subunit zeta-2 from Arabidopsis thaliana (Mouse-ear cress).